The chain runs to 456 residues: MDIKTLKGFKDYLPKDSLIRIHIVRQIFSVLNSYNFDLIDTPVLEYSELLLKKSGDEAEKQIYRFKDNGGRDVSMRFDLTVPFARFIATNASNLKFPFRRSQFGKVFRGENSQKGRYREFMQFDFDIVGEDSFRGDAEILSVVYYGLEEIFLNFIEGINKKFIIHYSHLGILNSFFEKLGIKEKSLFILRNIDKIDKIGVDKVKEALLLKIEKEVVDSILNLVNLQGTFKEKIQALKSILGDNESVKRVEDVFQHLSLLKIQDSFNLNLKISRGLDYYTGIVFESEVFDSNMGSVCSGGRYDNLVSSFSSSIQKISGVGGSFGVDRIKDIIDLEKFSYVKIFVTKARSKVLIVNLDSALQDYYYELATRFRNHDYSKVKNISCEVYFKNKNGKNIKEQIEYALSKEIRFLVFVGQEEYKENKMKVRDLTKKEELLLSFEESINVIKCSEKLLCTPF.

This sequence belongs to the class-II aminoacyl-tRNA synthetase family. As to quaternary structure, homodimer.

The protein resides in the cytoplasm. It catalyses the reaction tRNA(His) + L-histidine + ATP = L-histidyl-tRNA(His) + AMP + diphosphate + H(+). This is Histidine--tRNA ligase from Borreliella afzelii (strain PKo) (Borrelia afzelii).